The following is a 366-amino-acid chain: MIIDTTKVQQAINSFSRSESLKEVYGLIWLLVPIFTPLLGIIIGVLVIVWLERQISAGVQQRIGPEYAGPLGILQALADGTKLLFKEDLLPSRGDILLFSLGPSIAVISILLSYSVIPFGYHLVLADLSIGVFLWIAISSIAPIGLLMSGYGSNNKYSFLGGLRAAAQSISYEIPLTPCVLSISLLSNSSSTVDIVEAQSKYGFWGWNLWRQPIGFMVFLISSLAECERLPFDLPEAEEELVAGYQTEYSGIKFGLFYVASYLNLLVSSLFVTVLYLGGWNLSIPYIFIFIPELFRINEVCGIFGMTIGIFITLAKAYLFLFISITTRWTLPRMRMDQLLNLGWKFLLPISLGNLLLTTSFQLLSL.

The next 7 helical transmembrane spans lie at 28 to 48 (IWLL…VLVI), 105 to 125 (IAVI…HLVL), 128 to 148 (LSIG…GLLM), 250 to 270 (SGIK…VSSL), 271 to 291 (FVTV…FIFI), 303 to 323 (IFGM…FLFI), and 346 to 366 (FLLP…LLSL).

Belongs to the complex I subunit 1 family. In terms of assembly, NDH is composed of at least 16 different subunits, 5 of which are encoded in the nucleus.

It localises to the plastid. It is found in the chloroplast thylakoid membrane. The enzyme catalyses a plastoquinone + NADH + (n+1) H(+)(in) = a plastoquinol + NAD(+) + n H(+)(out). It carries out the reaction a plastoquinone + NADPH + (n+1) H(+)(in) = a plastoquinol + NADP(+) + n H(+)(out). Functionally, NDH shuttles electrons from NAD(P)H:plastoquinone, via FMN and iron-sulfur (Fe-S) centers, to quinones in the photosynthetic chain and possibly in a chloroplast respiratory chain. The immediate electron acceptor for the enzyme in this species is believed to be plastoquinone. Couples the redox reaction to proton translocation, and thus conserves the redox energy in a proton gradient. The sequence is that of NAD(P)H-quinone oxidoreductase subunit 1, chloroplastic from Nandina domestica (Heavenly bamboo).